Consider the following 99-residue polypeptide: A-type ATP synthase subunit F (99 aa).

This sequence belongs to the V-ATPase F subunit family. As to quaternary structure, has multiple subunits with at least A(3), B(3), C, D, E, F, H, I and proteolipid K(x).

Its subcellular location is the cell membrane. Its function is as follows. Component of the A-type ATP synthase that produces ATP from ADP in the presence of a proton gradient across the membrane. This chain is A-type ATP synthase subunit F, found in Methanococcus maripaludis (strain C7 / ATCC BAA-1331).